Here is a 146-residue protein sequence, read N- to C-terminus: Basic phospholipase A2 beta-bungarotoxin A2 chain (146 aa).

An N-terminal signal peptide occupies residues 1–19; sequence MNPAHLLVLSAVCVSLLGA. A propeptide spanning residues 20–27 is cleaved from the precursor; that stretch reads SNIPPQSL. Cystine bridges form between Cys-54/Cys-145, Cys-56/Cys-72, Cys-71/Cys-126, Cys-78/Cys-119, Cys-87/Cys-112, and Cys-105/Cys-117. The Ca(2+) site is built by Tyr-55, Gly-57, and Gly-59. The active site involves His-75. Residue Asp-76 coordinates Ca(2+). Residue Asp-120 is part of the active site.

This sequence belongs to the phospholipase A2 family. Group I subfamily. D49 sub-subfamily. Heterodimer; disulfide-linked. The A chain has phospholipase A2 activity and the B chain shows homology with the basic protease inhibitors. Ca(2+) serves as cofactor. As to expression, expressed by the venom gland.

It localises to the secreted. The catalysed reaction is a 1,2-diacyl-sn-glycero-3-phosphocholine + H2O = a 1-acyl-sn-glycero-3-phosphocholine + a fatty acid + H(+). In terms of biological role, snake venom phospholipase A2 (PLA2) that inhibits neuromuscular transmission by blocking acetylcholine release from the nerve termini. PLA2 catalyzes the calcium-dependent hydrolysis of the 2-acyl groups in 3-sn-phosphoglycerides. The protein is Basic phospholipase A2 beta-bungarotoxin A2 chain of Bungarus flaviceps flaviceps (Red-headed krait).